Consider the following 361-residue polypeptide: Protein RecA (361 aa).

77–84 (GPESSGKT) contacts ATP.

Belongs to the RecA family.

Its subcellular location is the cytoplasm. In terms of biological role, can catalyze the hydrolysis of ATP in the presence of single-stranded DNA, the ATP-dependent uptake of single-stranded DNA by duplex DNA, and the ATP-dependent hybridization of homologous single-stranded DNAs. It interacts with LexA causing its activation and leading to its autocatalytic cleavage. This is Protein RecA from Rhizobium rhizogenes (strain K84 / ATCC BAA-868) (Agrobacterium radiobacter).